A 78-amino-acid polypeptide reads, in one-letter code: MYGKIIFVLLLSGIVSISASSTTGVAMHTSTSSSVTKSYISSQTNGITLINWWAMARVIFEVMLVVVGMIILISYCIR.

Positions 1 to 19 are cleaved as a signal peptide; it reads MYGKIIFVLLLSGIVSISA. The Extracellular portion of the chain corresponds to 20 to 52; the sequence is SSTTGVAMHTSTSSSVTKSYISSQTNGITLINW. Residues 53 to 73 traverse the membrane as a helical segment; that stretch reads WAMARVIFEVMLVVVGMIILI. Topologically, residues 74-78 are cytoplasmic; sequence SYCIR.

This sequence belongs to the glycophorin-A family. Post-translationally, the N-terminal extracellular domain is heavily glycosylated on serine and threonine residues. In terms of tissue distribution, erythrocytes.

The protein resides in the membrane. This protein is a minor sialoglycoprotein in human erythrocyte membranes. This is Glycophorin-E (GYPE) from Homo sapiens (Human).